Consider the following 541-residue polypeptide: NADH-ubiquinone oxidoreductase chain 5 (541 aa).

A run of 16 helical transmembrane segments spans residues 17-37 (LLIF…LFAF), 48-70 (TIIH…YYMM), 74-94 (FVNR…LLIM), 98-118 (GLSL…LIMF), 130-150 (ITIL…GLMF), 157-177 (YMFL…SSFT), 191-213 (AMAA…AGIY), 226-246 (GCFL…LAAF), 263-283 (LGVM…FHLF), 285-305 (HALF…SLGV), 322-342 (SYII…SGFF), 353-373 (SLCM…TSTY), 404-424 (LFVL…MFSG), 429-449 (IILG…GVIL), 455-475 (SFSL…FITG), and 518-538 (FLTS…TLFM).

This sequence belongs to the complex I subunit 5 family.

Its subcellular location is the mitochondrion inner membrane. The catalysed reaction is a ubiquinone + NADH + 5 H(+)(in) = a ubiquinol + NAD(+) + 4 H(+)(out). Its function is as follows. Core subunit of the mitochondrial membrane respiratory chain NADH dehydrogenase (Complex I) that is believed to belong to the minimal assembly required for catalysis. Complex I functions in the transfer of electrons from NADH to the respiratory chain. The immediate electron acceptor for the enzyme is believed to be ubiquinone. The polypeptide is NADH-ubiquinone oxidoreductase chain 5 (ND5) (Artemia franciscana (Brine shrimp)).